Reading from the N-terminus, the 407-residue chain is Probable NADPH dehydrogenase (407 aa).

FMN is bound by residues T49 and Q124. 201 to 204 (HGAH) contributes to the substrate binding site. Y206 (proton donor) is an active-site residue. Residues R254 and R357 each coordinate FMN.

This sequence belongs to the NADH:flavin oxidoreductase/NADH oxidase family. Requires FMN as cofactor.

It carries out the reaction A + NADPH + H(+) = AH2 + NADP(+). Its function is as follows. Oxidoreductase that binds mammalian estrogens with high affinity. The sequence is that of Probable NADPH dehydrogenase from Candida albicans (Yeast).